The chain runs to 188 residues: Molybdopterin synthase catalytic subunit (188 aa).

Phosphoserine is present on Ser20. Substrate-binding positions include 143–144, Lys159, and 166–168; these read HR and KKE.

It belongs to the MoaE family. MOCS2B subfamily. Heterotetramer; composed of 2 small (MOCS2A) and 2 large (MOCS2B) subunits. Highest levels are found in heart and skeletal muscle. Lower levels are present in brain, kidney and pancreas. Very low levels are found in lung and peripheral blood leukocytes.

It is found in the cytoplasm. The protein resides in the cytosol. The enzyme catalyses 2 [molybdopterin-synthase sulfur-carrier protein]-C-terminal-Gly-aminoethanethioate + cyclic pyranopterin phosphate + H2O = molybdopterin + 2 [molybdopterin-synthase sulfur-carrier protein]-C-terminal Gly-Gly + 2 H(+). It functions in the pathway cofactor biosynthesis; molybdopterin biosynthesis. Functionally, catalytic subunit of the molybdopterin synthase complex, a complex that catalyzes the conversion of precursor Z into molybdopterin. Acts by mediating the incorporation of 2 sulfur atoms from thiocarboxylated MOCS2A into precursor Z to generate a dithiolene group. In Homo sapiens (Human), this protein is Molybdopterin synthase catalytic subunit.